The chain runs to 374 residues: Conserved virulence factor C (374 aa).

Belongs to the CvfC family.

Required for hemolysin production. In Staphylococcus aureus (strain N315), this protein is Conserved virulence factor C (cvfC).